The sequence spans 305 residues: Olfactory receptor 9G1 (305 aa).

Residues 1 to 24 (MQRSNHTVTEFILLGFTTDPGMQL) lie on the Extracellular side of the membrane. N-linked (GlcNAc...) asparagine glycosylation is present at Asn5. The chain crosses the membrane as a helical span at residues 25–45 (GLFVVFLGVYSLTVVGNSTLI). Topologically, residues 46–53 (VLICNDSC) are cytoplasmic. Residues 54 to 74 (LHTPMYFFTGNLSFLDLWYSS) form a helical membrane-spanning segment. At 75 to 98 (VYTPKILVTCISEDKSISFAGCLC) the chain is on the extracellular side. Cys96 and Cys188 are disulfide-bonded. Residues 99–119 (QFFFSAGLAYSECYLLAAVAY) form a helical membrane-spanning segment. The Cytoplasmic segment spans residues 120-138 (DRYVAISKPLLYAQAMSIK). A helical transmembrane segment spans residues 139-159 (LCALLVAVSYCGGFINSSIIT). The Extracellular portion of the chain corresponds to 160–196 (KKTFSFNFCRENIIDDFFCDLLPLVELACGEKGGYKI). Residues 197-216 (MMYFLLASNVICPAVLILAS) traverse the membrane as a helical segment. Residues 217–236 (YLFIITSVLRISSSKGYLKA) are Cytoplasmic-facing. A helical membrane pass occupies residues 237-257 (FSTCSSHLTSVTLYYGSILYI). The Extracellular portion of the chain corresponds to 258–270 (YALPRSSYSFDMD). A helical membrane pass occupies residues 271 to 291 (KIVSTFYTVVFPMLNLMIYSL). The Cytoplasmic portion of the chain corresponds to 292 to 305 (RNKDVKEALKKLLP).

This sequence belongs to the G-protein coupled receptor 1 family.

The protein localises to the cell membrane. Functionally, odorant receptor. The sequence is that of Olfactory receptor 9G1 (OR9G1) from Homo sapiens (Human).